The chain runs to 346 residues: Small ribosomal subunit biogenesis GTPase RsgA 1 (346 aa).

A CP-type G domain is found at 93 to 248; that stretch reads EEQLIAANFD…IIDTPGMREF (156 aa). GTP is bound by residues 138–141 and 190–198; these read TKAD and GSSGVGKSS. Zn(2+) is bound by residues Cys-271, Cys-276, His-278, and Cys-284.

This sequence belongs to the TRAFAC class YlqF/YawG GTPase family. RsgA subfamily. In terms of assembly, monomer. Associates with 30S ribosomal subunit, binds 16S rRNA. Requires Zn(2+) as cofactor.

Its subcellular location is the cytoplasm. Functionally, one of several proteins that assist in the late maturation steps of the functional core of the 30S ribosomal subunit. Helps release RbfA from mature subunits. May play a role in the assembly of ribosomal proteins into the subunit. Circularly permuted GTPase that catalyzes slow GTP hydrolysis, GTPase activity is stimulated by the 30S ribosomal subunit. This chain is Small ribosomal subunit biogenesis GTPase RsgA 1, found in Listeria innocua serovar 6a (strain ATCC BAA-680 / CLIP 11262).